A 485-amino-acid chain; its full sequence is Cysteine--tRNA ligase (485 aa).

A Zn(2+)-binding site is contributed by C27. The 'HIGH' region motif lies at 29–39 (ITAYDLCHIGH). 3 residues coordinate Zn(2+): C208, H233, and E237. The 'KMSKS' region motif lies at 265 to 269 (KMSKS). Residue K268 participates in ATP binding.

This sequence belongs to the class-I aminoacyl-tRNA synthetase family. In terms of assembly, monomer. Zn(2+) serves as cofactor.

The protein localises to the cytoplasm. The enzyme catalyses tRNA(Cys) + L-cysteine + ATP = L-cysteinyl-tRNA(Cys) + AMP + diphosphate. The polypeptide is Cysteine--tRNA ligase (Nitratidesulfovibrio vulgaris (strain DP4) (Desulfovibrio vulgaris)).